We begin with the raw amino-acid sequence, 453 residues long: Na(+)/H(+) antiporter NhaA 2 (453 aa).

12 consecutive transmembrane segments (helical) span residues 23–43, 74–94, 111–131, 139–159, 168–188, 191–211, 214–234, 235–255, 316–336, 345–365, 386–406, and 419–439; these read FLHI…AALI, LHFW…GMEI, LPMA…LSFG, GWAV…ALLG, VFLL…IAFF, GGLD…VIGL, IGVG…LGIL, LTGA…PVTA, VAFG…LSGV, WVMI…IVSV, IMLV…IANL, and LGVL…GVWS.

This sequence belongs to the NhaA Na(+)/H(+) (TC 2.A.33) antiporter family.

The protein localises to the cell inner membrane. The enzyme catalyses Na(+)(in) + 2 H(+)(out) = Na(+)(out) + 2 H(+)(in). Its function is as follows. Na(+)/H(+) antiporter that extrudes sodium in exchange for external protons. This Pseudomonas putida (strain ATCC 47054 / DSM 6125 / CFBP 8728 / NCIMB 11950 / KT2440) protein is Na(+)/H(+) antiporter NhaA 2.